Here is a 57-residue protein sequence, read N- to C-terminus: Large ribosomal subunit protein bL32 (57 aa).

The interval Met1 to Thr23 is disordered. Over residues Ser9–Tyr20 the composition is skewed to basic residues.

This sequence belongs to the bacterial ribosomal protein bL32 family.

In Lactococcus lactis subsp. cremoris (strain MG1363), this protein is Large ribosomal subunit protein bL32.